Consider the following 534-residue polypeptide: Apolipoprotein N-acyltransferase (534 aa).

A run of 7 helical transmembrane segments spans residues 8 to 28, 31 to 51, 69 to 89, 105 to 125, 127 to 147, 178 to 198, and 208 to 228; these read VILV…AFAV, LPPF…VWLI, AFAV…WWLG, LAIL…VALA, IFWS…GLME, VIGA…PALF, and VALA…ALYL. One can recognise a CN hydrolase domain in the interval 246–496; it reads VQPDIDQAAK…TGFIDATVDS (251 aa). Residue E291 is the Proton acceptor of the active site. K355 is an active-site residue. Residue C408 is the Nucleophile of the active site. Residues 511–531 form a helical membrane-spanning segment; that stretch reads FWLTEALLILIALISREGFIF.

The protein belongs to the CN hydrolase family. Apolipoprotein N-acyltransferase subfamily.

It is found in the cell inner membrane. It carries out the reaction N-terminal S-1,2-diacyl-sn-glyceryl-L-cysteinyl-[lipoprotein] + a glycerophospholipid = N-acyl-S-1,2-diacyl-sn-glyceryl-L-cysteinyl-[lipoprotein] + a 2-acyl-sn-glycero-3-phospholipid + H(+). It functions in the pathway protein modification; lipoprotein biosynthesis (N-acyl transfer). Functionally, catalyzes the phospholipid dependent N-acylation of the N-terminal cysteine of apolipoprotein, the last step in lipoprotein maturation. The sequence is that of Apolipoprotein N-acyltransferase from Rhizobium etli (strain CIAT 652).